A 130-amino-acid polypeptide reads, in one-letter code: Probable 4-amino-4-deoxy-L-arabinose-phosphoundecaprenol flippase subunit ArnF (130 aa).

The Cytoplasmic segment spans residues 1–4 (MRGY). Residues 5 to 25 (AWGAASVLLVTLAQLLMKWGM) traverse the membrane as a helical segment. Topologically, residues 26–47 (AQIPLMSFADVTLNLFMQYWLP) are periplasmic. The chain crosses the membrane as a helical span at residues 48–68 (LVVVSGGIFGYALSMLCWFFA). The Cytoplasmic portion of the chain corresponds to 69–77 (LHHLPLNRA). A helical membrane pass occupies residues 78–98 (YPLLSVSYALVYLAAVILPWF). A topological domain (periplasmic) is located at residue Asn99. Residues 100–120 (ESATLLKTLGTLFILFGVWLI) form a helical membrane-spanning segment. The Cytoplasmic segment spans residues 121–130 (NSQAKVKTPQ).

Belongs to the ArnF family. In terms of assembly, heterodimer of ArnE and ArnF.

The protein resides in the cell inner membrane. It functions in the pathway bacterial outer membrane biogenesis; lipopolysaccharide biosynthesis. In terms of biological role, translocates 4-amino-4-deoxy-L-arabinose-phosphoundecaprenol (alpha-L-Ara4N-phosphoundecaprenol) from the cytoplasmic to the periplasmic side of the inner membrane. The chain is Probable 4-amino-4-deoxy-L-arabinose-phosphoundecaprenol flippase subunit ArnF from Serratia proteamaculans (strain 568).